The chain runs to 966 residues: RNA polymerase-associated protein RapA (966 aa).

Residues 163 to 337 form the Helicase ATP-binding domain; it reads EVGQRLHPRV…FARLKLLDAD (175 aa). 176 to 183 contacts ATP; that stretch reads DEVGLGKT. The short motif at 283-286 is the DEAH box element; that stretch reads DEAH. The Helicase C-terminal domain maps to 488–642; sequence RVEWLITFLK…ICPMGMALFE (155 aa).

Belongs to the SNF2/RAD54 helicase family. RapA subfamily. In terms of assembly, interacts with the RNAP. Has a higher affinity for the core RNAP than for the holoenzyme. Its ATPase activity is stimulated by binding to RNAP.

Transcription regulator that activates transcription by stimulating RNA polymerase (RNAP) recycling in case of stress conditions such as supercoiled DNA or high salt concentrations. Probably acts by releasing the RNAP, when it is trapped or immobilized on tightly supercoiled DNA. Does not activate transcription on linear DNA. Probably not involved in DNA repair. This chain is RNA polymerase-associated protein RapA, found in Actinobacillus succinogenes (strain ATCC 55618 / DSM 22257 / CCUG 43843 / 130Z).